Reading from the N-terminus, the 143-residue chain is Potassium voltage-gated channel subfamily E regulatory beta subunit 5 (143 aa).

2 N-linked (GlcNAc...) asparagine glycosylation sites follow: Asn-2 and Asn-25. The chain crosses the membrane as a helical span at residues 61-81 (LYILLIMIFYACLAGGLILAY). The Cytoplasmic portion of the chain corresponds to 82–143 (TRSRKLVEAK…PALAQGAERV (62 aa)).

It belongs to the potassium channel KCNE family. Interacts with KCNQ1; impairs KCNQ1 localization in lipid rafts and only conducts current upon strong and continued depolarization. Detected in embryonal dorsal root and nerve ganglia, in the somites and in myoepicardial layer of the developing heart wall. Detected at lower levels in the central nervous system (CNS) and in developing limb.

The protein localises to the membrane. Functionally, potassium channel ancillary subunit that is essential for generation of some native K(+) currents by virtue of formation of heteromeric ion channel complex with voltage-gated potassium (Kv) channel pore-forming alpha subunits. Functions as an inhibitory beta-subunit of the repolarizing cardiac potassium ion channel KCNQ1. The protein is Potassium voltage-gated channel subfamily E regulatory beta subunit 5 (Kcne5) of Mus musculus (Mouse).